The sequence spans 197 residues: uncharacterized protein (197 aa).

Residues 11–31 (ICGFSLVALTIAGIVGGVYLV) traverse the membrane as a helical segment.

The protein resides in the membrane. This is an uncharacterized protein from Mycoplasma pneumoniae (strain ATCC 29342 / M129 / Subtype 1) (Mycoplasmoides pneumoniae).